We begin with the raw amino-acid sequence, 295 residues long: Ribosomal protein L11 methyltransferase (295 aa).

Residues Thr-150, Gly-171, Asp-193, and Asn-232 each coordinate S-adenosyl-L-methionine.

The protein belongs to the methyltransferase superfamily. PrmA family.

It is found in the cytoplasm. It carries out the reaction L-lysyl-[protein] + 3 S-adenosyl-L-methionine = N(6),N(6),N(6)-trimethyl-L-lysyl-[protein] + 3 S-adenosyl-L-homocysteine + 3 H(+). In terms of biological role, methylates ribosomal protein L11. This Neisseria gonorrhoeae (strain ATCC 700825 / FA 1090) protein is Ribosomal protein L11 methyltransferase.